The sequence spans 117 residues: Ribosome-binding factor A (117 aa).

Belongs to the RbfA family. In terms of assembly, monomer. Binds 30S ribosomal subunits, but not 50S ribosomal subunits or 70S ribosomes.

The protein localises to the cytoplasm. In terms of biological role, one of several proteins that assist in the late maturation steps of the functional core of the 30S ribosomal subunit. Associates with free 30S ribosomal subunits (but not with 30S subunits that are part of 70S ribosomes or polysomes). Required for efficient processing of 16S rRNA. May interact with the 5'-terminal helix region of 16S rRNA. The protein is Ribosome-binding factor A of Streptococcus thermophilus (strain CNRZ 1066).